A 338-amino-acid chain; its full sequence is Ferrochelatase (338 aa).

Residues histidine 189 and glutamate 293 each coordinate Fe cation.

The protein belongs to the ferrochelatase family.

The protein resides in the cytoplasm. It catalyses the reaction heme b + 2 H(+) = protoporphyrin IX + Fe(2+). It participates in porphyrin-containing compound metabolism; protoheme biosynthesis; protoheme from protoporphyrin-IX: step 1/1. Catalyzes the ferrous insertion into protoporphyrin IX. The polypeptide is Ferrochelatase (Azotobacter vinelandii (strain DJ / ATCC BAA-1303)).